Consider the following 66-residue polypeptide: Large ribosomal subunit protein uL29 (66 aa).

It belongs to the universal ribosomal protein uL29 family.

This Fervidobacterium nodosum (strain ATCC 35602 / DSM 5306 / Rt17-B1) protein is Large ribosomal subunit protein uL29.